The following is a 248-amino-acid chain: Caffeoyl-CoA O-methyltransferase 3 (248 aa).

Position 22 (lysine 22) interacts with substrate. Residues threonine 64, glutamate 86, 88–89 (GV), serine 94, aspartate 112, and alanine 141 contribute to the S-adenosyl-L-methionine site. A substrate-binding site is contributed by aspartate 164. Aspartate 164 provides a ligand contact to a divalent metal cation. Aspartate 166 is a binding site for S-adenosyl-L-methionine. 2 residues coordinate a divalent metal cation: aspartate 190 and asparagine 191. Asparagine 195 lines the substrate pocket.

Belongs to the class I-like SAM-binding methyltransferase superfamily. Cation-dependent O-methyltransferase family. CCoAMT subfamily. It depends on a divalent metal cation as a cofactor. Mostly expressed in petal limbs and tubes, and, at low levels, in stems, roots and leaves.

The protein resides in the cytoplasm. It is found in the cytosol. The enzyme catalyses (E)-caffeoyl-CoA + S-adenosyl-L-methionine = (E)-feruloyl-CoA + S-adenosyl-L-homocysteine + H(+). It catalyses the reaction (E)-5-hydroxyferuloyl-CoA + S-adenosyl-L-methionine = (E)-sinapoyl-CoA + S-adenosyl-L-homocysteine + H(+). It functions in the pathway aromatic compound metabolism; phenylpropanoid biosynthesis. Its function is as follows. Involved in the production of floral volatile phenylpropanoids in flowers of fragrant cultivars (e.g. cv. Mitchell and cv. V26) from cinnamic acid, a common precursor with the anthocyanin biosynthesis pathway involved in flower pigmentation. Methylates caffeoyl-CoA to feruloyl-CoA, also able to methylate 5-hydroxyferuloyl-CoA. The polypeptide is Caffeoyl-CoA O-methyltransferase 3 (Petunia hybrida (Petunia)).